Here is a 154-residue protein sequence, read N- to C-terminus: 3-hydroxyacyl-[acyl-carrier-protein] dehydratase FabZ (154 aa).

The active site involves His57.

This sequence belongs to the thioester dehydratase family. FabZ subfamily.

Its subcellular location is the cytoplasm. It carries out the reaction a (3R)-hydroxyacyl-[ACP] = a (2E)-enoyl-[ACP] + H2O. Functionally, involved in unsaturated fatty acids biosynthesis. Catalyzes the dehydration of short chain beta-hydroxyacyl-ACPs and long chain saturated and unsaturated beta-hydroxyacyl-ACPs. The protein is 3-hydroxyacyl-[acyl-carrier-protein] dehydratase FabZ of Sinorhizobium medicae (strain WSM419) (Ensifer medicae).